The primary structure comprises 211 residues: Ubiquitin-conjugating enzyme E2 S (211 aa).

The region spanning 11 to 157 is the UBC core domain; it reads HIIRQVYKEV…ARLMTEIHAQ (147 aa). The active-site Glycyl thioester intermediate is C95. Residues 157–211 form a disordered region; that stretch reads QGSSLRGKDPTDPCSSASATLVSGDGPMAKKHAGDRDKKLAAKKKTDKKRALRRL. Residues 197–211 are compositionally biased toward basic residues; that stretch reads AAKKKTDKKRALRRL.

Belongs to the ubiquitin-conjugating enzyme family.

It catalyses the reaction S-ubiquitinyl-[E1 ubiquitin-activating enzyme]-L-cysteine + [E2 ubiquitin-conjugating enzyme]-L-cysteine = [E1 ubiquitin-activating enzyme]-L-cysteine + S-ubiquitinyl-[E2 ubiquitin-conjugating enzyme]-L-cysteine.. It functions in the pathway protein modification; protein ubiquitination. Catalyzes the covalent attachment of ubiquitin to other proteins. Acts as an essential factor of the anaphase promoting complex/cyclosome (APC/C), a cell cycle-regulated ubiquitin ligase that controls progression through mitosis. Acts by specifically elongating 'Lys-11'-linked polyubiquitin chains initiated by the E2 enzyme ube2c/ubch10 on APC/C substrates, enhancing the degradation of APC/C substrates by the proteasome and promoting mitotic exit. This Xenopus tropicalis (Western clawed frog) protein is Ubiquitin-conjugating enzyme E2 S (ube2s).